We begin with the raw amino-acid sequence, 627 residues long: Ski protein homolog (627 aa).

Residues 1 to 12 (MSDSPIGSSQQV) are compositionally biased toward polar residues. Disordered regions lie at residues 1-22 (MSDS…PDLM), 34-58 (LHEE…KDSR), and 299-318 (EYDE…METP).

The protein belongs to the SKI family. In terms of assembly, may interact with daf-3. Expressed in ganglia in the head and tail and in the anterior pharynx.

It is found in the nucleus. Its function is as follows. Probable component of transcriptional regulatory complex with SMAD protein daf-3. Required to regulate entry into a developmentally arrested larval state known as dauer, in response to harsh environmental conditions. Involved in larvae undergoing cell-cycle arrest during the dauer stage. This chain is Ski protein homolog, found in Caenorhabditis elegans.